Reading from the N-terminus, the 345-residue chain is Nicotinate-nucleotide--dimethylbenzimidazole phosphoribosyltransferase (345 aa).

Residue Glu312 is the Proton acceptor of the active site.

Belongs to the CobT family.

It carries out the reaction 5,6-dimethylbenzimidazole + nicotinate beta-D-ribonucleotide = alpha-ribazole 5'-phosphate + nicotinate + H(+). It participates in nucleoside biosynthesis; alpha-ribazole biosynthesis; alpha-ribazole from 5,6-dimethylbenzimidazole: step 1/2. In terms of biological role, catalyzes the synthesis of alpha-ribazole-5'-phosphate from nicotinate mononucleotide (NAMN) and 5,6-dimethylbenzimidazole (DMB). In Bacteroides fragilis (strain YCH46), this protein is Nicotinate-nucleotide--dimethylbenzimidazole phosphoribosyltransferase.